The primary structure comprises 379 residues: ATP phosphoribosyltransferase regulatory subunit (379 aa).

It belongs to the class-II aminoacyl-tRNA synthetase family. HisZ subfamily. As to quaternary structure, heteromultimer composed of HisG and HisZ subunits.

The protein resides in the cytoplasm. The protein operates within amino-acid biosynthesis; L-histidine biosynthesis; L-histidine from 5-phospho-alpha-D-ribose 1-diphosphate: step 1/9. Its function is as follows. Required for the first step of histidine biosynthesis. May allow the feedback regulation of ATP phosphoribosyltransferase activity by histidine. The protein is ATP phosphoribosyltransferase regulatory subunit of Gluconobacter oxydans (strain 621H) (Gluconobacter suboxydans).